Reading from the N-terminus, the 318-residue chain is uncharacterized protein (318 aa).

Belongs to the NAD(P)-dependent epimerase/dehydratase family.

This is an uncharacterized protein from Staphylococcus epidermidis (strain ATCC 12228 / FDA PCI 1200).